The sequence spans 237 residues: Purine nucleoside phosphorylase DeoD-type (237 aa).

An a purine D-ribonucleoside-binding site is contributed by histidine 4. Phosphate-binding positions include glycine 20, arginine 24, arginine 43, and 87–90 (RVGT). A purine D-ribonucleoside contacts are provided by residues 179 to 181 (EME) and 203 to 204 (SD). Residue aspartate 204 is the Proton donor of the active site.

It belongs to the PNP/UDP phosphorylase family. Homohexamer; trimer of homodimers.

The catalysed reaction is a purine D-ribonucleoside + phosphate = a purine nucleobase + alpha-D-ribose 1-phosphate. The enzyme catalyses a purine 2'-deoxy-D-ribonucleoside + phosphate = a purine nucleobase + 2-deoxy-alpha-D-ribose 1-phosphate. Functionally, catalyzes the reversible phosphorolytic breakdown of the N-glycosidic bond in the beta-(deoxy)ribonucleoside molecules, with the formation of the corresponding free purine bases and pentose-1-phosphate. The chain is Purine nucleoside phosphorylase DeoD-type from Streptococcus pyogenes serotype M5 (strain Manfredo).